We begin with the raw amino-acid sequence, 282 residues long: Sulfur carrier protein FdhD (282 aa).

The Cysteine persulfide intermediate role is filled by Cys-115.

The protein belongs to the FdhD family.

It localises to the cytoplasm. Its function is as follows. Required for formate dehydrogenase (FDH) activity. Acts as a sulfur carrier protein that transfers sulfur from IscS to the molybdenum cofactor prior to its insertion into FDH. The polypeptide is Sulfur carrier protein FdhD (Streptomyces coelicolor (strain ATCC BAA-471 / A3(2) / M145)).